A 439-amino-acid polypeptide reads, in one-letter code: Hemagglutinin-esterase (439 aa).

Positions 1–22 are cleaved as a signal peptide; it reads MGSTCIAMAPRTLLLLIGCQLV. The tract at residues 12 to 132 is esterase domain 1; that stretch reads TLLLLIGCQL…DNKRWMGNKA (121 aa). The Virion surface portion of the chain corresponds to 23 to 407; sequence FGFNEPLNIV…PVCIYDPLPV (385 aa). Ser45 (nucleophile) is an active-site residue. Cysteines 49 and 70 form a disulfide. Asn94 carries an N-linked (GlcNAc...) asparagine; by host glycan. The cysteines at positions 118 and 167 are disulfide-linked. A receptor binding region spans residues 133–281; it reads RFYARVYEKM…GNYKAVSLEY (149 aa). 4 N-linked (GlcNAc...) asparagine; by host glycosylation sites follow: Asn196, Asn246, Asn309, and Asn316. 2 disulfides stabilise this stretch: Cys202–Cys291 and Cys210–Cys264. Residues 282-395 are esterase domain 2; the sequence is LLSLPSKAIC…QCPTAANIGY (114 aa). A disulfide bond links Cys322 and Cys327. Residue Asn331 is glycosylated (N-linked (GlcNAc...) asparagine; by host). Residues Asp342 and His345 each act as charge relay system in the active site. 2 N-linked (GlcNAc...) asparagine; by host glycosylation sites follow: Asn360 and Asn374. Cys363 and Cys387 are joined by a disulfide. The helical transmembrane segment at 408-428 threads the bilayer; sequence VLLGVLLGIAVLIIVFLILYF. Residues 429-439 are Intravirion-facing; it reads MTDSGVRLHEA.

It belongs to the influenza type C/coronaviruses hemagglutinin-esterase family. As to quaternary structure, homodimer; disulfide-linked. Forms a complex with the M protein in the pre-Golgi. Associates then with S-M complex to form a ternary complex S-M-HE. N-glycosylated in the host RER.

Its subcellular location is the virion membrane. The protein resides in the host cell membrane. The enzyme catalyses N-acetyl-9-O-acetylneuraminate + H2O = N-acetylneuraminate + acetate + H(+). It carries out the reaction N-acetyl-4-O-acetylneuraminate + H2O = N-acetylneuraminate + acetate + H(+). Its function is as follows. Structural protein that makes short spikes at the surface of the virus. Contains receptor binding and receptor-destroying activities. Mediates de-O-acetylation of N-acetyl-4-O-acetylneuraminic acid, which is probably the receptor determinant recognized by the virus on the surface of erythrocytes and susceptible cells. This receptor-destroying activity is important for virus release as it probably helps preventing self-aggregation and ensures the efficient spread of the progeny virus from cell to cell. May serve as a secondary viral attachment protein for initiating infection, the spike protein being the major one. May become a target for both the humoral and the cellular branches of the immune system. This chain is Hemagglutinin-esterase, found in Murine coronavirus (strain JHM) (MHV-JHM).